Consider the following 20-residue polypeptide: Pregnancy-associated glycoprotein 73B (20 aa).

This sequence belongs to the peptidase A1 family. N-glycosylated. As to expression, expressed in chorionic epithelium (trophectoderm).

It localises to the secreted. It is found in the extracellular space. In Bubalus bubalis (Domestic water buffalo), this protein is Pregnancy-associated glycoprotein 73B.